The sequence spans 65 residues: Large ribosomal subunit protein bL35 (65 aa).

It belongs to the bacterial ribosomal protein bL35 family.

In Borrelia turicatae (strain 91E135), this protein is Large ribosomal subunit protein bL35.